A 201-amino-acid chain; its full sequence is Recombination protein RecR (201 aa).

The C4-type zinc finger occupies 57–72 (CADCRTFTEQDVCNIC). Positions 81-176 (GQICVVESPA…SASRIAHGVP (96 aa)) constitute a Toprim domain.

Belongs to the RecR family.

In terms of biological role, may play a role in DNA repair. It seems to be involved in an RecBC-independent recombinational process of DNA repair. It may act with RecF and RecO. The protein is Recombination protein RecR of Enterobacter sp. (strain 638).